Consider the following 375-residue polypeptide: 23S rRNA (uracil(747)-C(5))-methyltransferase RlmC (375 aa).

[4Fe-4S] cluster contacts are provided by cysteine 3, cysteine 11, cysteine 14, and cysteine 87. S-adenosyl-L-methionine-binding residues include glutamine 212, phenylalanine 241, glutamate 262, and asparagine 307. Residue cysteine 334 is the Nucleophile of the active site.

The protein belongs to the class I-like SAM-binding methyltransferase superfamily. RNA M5U methyltransferase family. RlmC subfamily.

The enzyme catalyses uridine(747) in 23S rRNA + S-adenosyl-L-methionine = 5-methyluridine(747) in 23S rRNA + S-adenosyl-L-homocysteine + H(+). Functionally, catalyzes the formation of 5-methyl-uridine at position 747 (m5U747) in 23S rRNA. The chain is 23S rRNA (uracil(747)-C(5))-methyltransferase RlmC from Shigella sonnei (strain Ss046).